Here is a 61-residue protein sequence, read N- to C-terminus: Large ribosomal subunit protein uL30 (61 aa).

This sequence belongs to the universal ribosomal protein uL30 family. As to quaternary structure, part of the 50S ribosomal subunit.

This is Large ribosomal subunit protein uL30 from Francisella philomiragia subsp. philomiragia (strain ATCC 25017 / CCUG 19701 / FSC 153 / O#319-036).